The following is a 353-amino-acid chain: Photosystem II D2 protein (353 aa).

Thr-2 carries the N-acetylthreonine modification. Thr-2 carries the phosphothreonine modification. A helical transmembrane segment spans residues 41-61 (CAYFALGGWFTGTTFVTSWYT). His-118 provides a ligand contact to chlorophyll a. The helical transmembrane segment at 125–141 (GFMLRQFELARSVQLRP) threads the bilayer. Residues Gln-130 and Asn-143 each coordinate pheophytin a. Residues 153 to 166 (VFVSVFLIYPLGQS) form a helical membrane-spanning segment. His-198 provides a ligand contact to chlorophyll a. A helical membrane pass occupies residues 208–228 (AALLCAIHGATVENTLFEDGD). Positions 215 and 262 each coordinate a plastoquinone. Position 215 (His-215) interacts with Fe cation. His-269 contributes to the Fe cation binding site. A helical membrane pass occupies residues 279–295 (GLWMSALGVVGLALNLR).

Belongs to the reaction center PufL/M/PsbA/D family. As to quaternary structure, PSII is composed of 1 copy each of membrane proteins PsbA, PsbB, PsbC, PsbD, PsbE, PsbF, PsbH, PsbI, PsbJ, PsbK, PsbL, PsbM, PsbT, PsbX, PsbY, PsbZ, Psb30/Ycf12, at least 3 peripheral proteins of the oxygen-evolving complex and a large number of cofactors. It forms dimeric complexes. Requires The D1/D2 heterodimer binds P680, chlorophylls that are the primary electron donor of PSII, and subsequent electron acceptors. It shares a non-heme iron and each subunit binds pheophytin, quinone, additional chlorophylls, carotenoids and lipids. There is also a Cl(-1) ion associated with D1 and D2, which is required for oxygen evolution. The PSII complex binds additional chlorophylls, carotenoids and specific lipids. as cofactor.

It localises to the plastid. The protein resides in the chloroplast thylakoid membrane. It catalyses the reaction 2 a plastoquinone + 4 hnu + 2 H2O = 2 a plastoquinol + O2. Functionally, photosystem II (PSII) is a light-driven water:plastoquinone oxidoreductase that uses light energy to abstract electrons from H(2)O, generating O(2) and a proton gradient subsequently used for ATP formation. It consists of a core antenna complex that captures photons, and an electron transfer chain that converts photonic excitation into a charge separation. The D1/D2 (PsbA/PsbD) reaction center heterodimer binds P680, the primary electron donor of PSII as well as several subsequent electron acceptors. D2 is needed for assembly of a stable PSII complex. This Ranunculus macranthus (Large buttercup) protein is Photosystem II D2 protein.